The following is a 563-amino-acid chain: Arginine--tRNA ligase (563 aa).

The short motif at proline 121–histidine 131 is the 'HIGH' region element.

The protein belongs to the class-I aminoacyl-tRNA synthetase family. Monomer.

The protein localises to the cytoplasm. The enzyme catalyses tRNA(Arg) + L-arginine + ATP = L-arginyl-tRNA(Arg) + AMP + diphosphate. The chain is Arginine--tRNA ligase from Streptococcus pyogenes serotype M1.